We begin with the raw amino-acid sequence, 544 residues long: Pectinesterase 3 (544 aa).

N-linked (GlcNAc...) asparagine glycans are attached at residues Asn174, Asn257, and Asn291. 2 residues coordinate substrate: Thr306 and Gln336. Asp359 acts as the Proton donor in catalysis. Asp380 (nucleophile) is an active-site residue. Substrate-binding residues include Arg448 and Trp450. An N-linked (GlcNAc...) asparagine glycan is attached at Asn532.

In the N-terminal section; belongs to the PMEI family. This sequence in the C-terminal section; belongs to the pectinesterase family.

The protein localises to the secreted. It localises to the cell wall. The enzyme catalyses [(1-&gt;4)-alpha-D-galacturonosyl methyl ester](n) + n H2O = [(1-&gt;4)-alpha-D-galacturonosyl](n) + n methanol + n H(+). It functions in the pathway glycan metabolism; pectin degradation; 2-dehydro-3-deoxy-D-gluconate from pectin: step 1/5. Its function is as follows. Acts in the modification of cell walls via demethylesterification of cell wall pectin. The sequence is that of Pectinesterase 3 (PME3) from Solanum lycopersicum (Tomato).